A 130-amino-acid polypeptide reads, in one-letter code: Small ribosomal subunit protein uS8 (130 aa).

Belongs to the universal ribosomal protein uS8 family. As to quaternary structure, part of the 30S ribosomal subunit. Contacts proteins S5 and S12.

In terms of biological role, one of the primary rRNA binding proteins, it binds directly to 16S rRNA central domain where it helps coordinate assembly of the platform of the 30S subunit. This chain is Small ribosomal subunit protein uS8, found in Shewanella baltica (strain OS223).